Here is a 236-residue protein sequence, read N- to C-terminus: Baculoviral IAP repeat-containing protein 8 (236 aa).

The BIR repeat unit spans residues 7–70 (WLITFGTWMY…KWYPGCKYLL (64 aa)). Zn(2+) is bound by residues Cys-39, Cys-42, His-59, and Cys-66. Residues 189–224 (CKICMDRHIAVVFIPCGHLVTCKQCAEAVDRCPMCN) form an RING-type zinc finger.

Belongs to the IAP family. As to quaternary structure, binds to caspase-9.

The protein resides in the cytoplasm. Its function is as follows. Protects against apoptosis mediated by BAX. The protein is Baculoviral IAP repeat-containing protein 8 (BIRC8) of Gorilla gorilla gorilla (Western lowland gorilla).